A 415-amino-acid polypeptide reads, in one-letter code: 3-isopropylmalate dehydratase large subunit (415 aa).

[4Fe-4S] cluster-binding residues include cysteine 295, cysteine 353, and cysteine 356.

The protein belongs to the aconitase/IPM isomerase family. LeuC type 2 subfamily. As to quaternary structure, heterodimer of LeuC and LeuD. Requires [4Fe-4S] cluster as cofactor.

It carries out the reaction (2R,3S)-3-isopropylmalate = (2S)-2-isopropylmalate. It participates in amino-acid biosynthesis; L-leucine biosynthesis; L-leucine from 3-methyl-2-oxobutanoate: step 2/4. In terms of biological role, catalyzes the isomerization between 2-isopropylmalate and 3-isopropylmalate, via the formation of 2-isopropylmaleate. This Pyrobaculum neutrophilum (strain DSM 2338 / JCM 9278 / NBRC 100436 / V24Sta) (Thermoproteus neutrophilus) protein is 3-isopropylmalate dehydratase large subunit.